The following is a 714-amino-acid chain: Nucleolin (714 aa).

The tract at residues 1–303 (MVKLAKAGKT…AKKQKVEGSE (303 aa)) is disordered. N6-acetyllysine occurs at positions 9, 15, and 16. The segment covering 24–42 (VEEDSEDEEMSEEEDDSSG) has biased composition (acidic residues). A phosphoserine mark is found at Ser-28, Ser-34, Ser-40, and Ser-41. Over residues 55–106 (ATATPAKKVVVSQTKKVAVPTPAKKAAVTPGKKAAATPAKKAVTPAKAVATP) the composition is skewed to low complexity. The stretch at 57–64 (ATPAKKVV) is repeat 1. Residues 57–134 (ATPAKKVVVS…GAVTPAKGAK (78 aa)) are 8 X 8 AA tandem repeats of X-T-P-X-K-K-X-X. Residue Ser-66 is modified to Phosphoserine. 4 positions are modified to phosphothreonine: Thr-68, Thr-75, Thr-83, and Thr-91. 3 consecutive repeat copies span residues 74-81 (PTPAKKAA), 82-89 (VTPGKKAA), and 90-97 (ATPAKKAV). Lys-95 is modified (N6-acetyllysine). The residue at position 98 (Thr-98) is a Phosphothreonine. A 5; truncated repeat occupies 98–103 (TPAKAV). The residue at position 101 (Lys-101) is an N6-acetyllysine. Residues 104–111 (ATPGKKGA) form repeat 6. Residue Thr-105 is modified to Phosphothreonine. Residue Lys-108 is modified to N6-acetyllysine. A Phosphothreonine modification is found at Thr-112. Lys-115 is modified (N6-acetyllysine). 2 tandem repeats follow at residues 119–126 (ATPGKKGA) and 127–134 (VTPAKGAK). A Phosphothreonine modification is found at Thr-120. Lys-123 is modified (N6-acetyllysine). Residues Ser-144 and Ser-157 each carry the phosphoserine modification. The span at 144 to 170 (SDEDEDDDDDEDDSDEDEEDEEEDEFE) shows a compositional bias: acidic residues. Residues 171–187 (PPVVKGKQGKVAAAAPA) are compositionally biased toward low complexity. Ser-188 carries the post-translational modification Phosphoserine. Over residues 188-216 (SEDEDEEEDEEEEEEDEEEEDDSEEEEAM) the composition is skewed to acidic residues. Thr-219 carries the post-translational modification Phosphothreonine. Positions 240–272 (EEDDDDEEEDEDEEEDEEEEEDEEEEEEEEEEE) are enriched in acidic residues. Basic and acidic residues predominate over residues 285-301 (MTKQKEVPEAKKQKVEG). Lys-298 is covalently cross-linked (Glycyl lysine isopeptide (Lys-Gly) (interchain with G-Cter in SUMO1); alternate). A Glycyl lysine isopeptide (Lys-Gly) (interchain with G-Cter in SUMO2); alternate cross-link involves residue Lys-298. A Phosphoserine modification is found at Ser-302. 2 RRM domains span residues 308-384 (FNLF…KPKG) and 394-467 (RTLL…YTGE). Lys-319 carries the post-translational modification N6-acetyllysine. Lys-325 is covalently cross-linked (Glycyl lysine isopeptide (Lys-Gly) (interchain with G-Cter in SUMO1); alternate). A Glycyl lysine isopeptide (Lys-Gly) (interchain with G-Cter in SUMO2); alternate cross-link involves residue Lys-325. Lys-349 carries the post-translational modification N6-acetyllysine. Residue Ser-357 is modified to Phosphoserine. Thr-368 carries the phosphothreonine modification. Residue Lys-371 forms a Glycyl lysine isopeptide (Lys-Gly) (interchain with G-Cter in SUMO2) linkage. Residue Lys-378 forms a Glycyl lysine isopeptide (Lys-Gly) (interchain with G-Cter in SUMO2); alternate linkage. The residue at position 378 (Lys-378) is an N6-acetyllysine; alternate. Residue Lys-399 is modified to N6-acetyllysine. Ser-402 carries the phosphoserine modification. A Phosphothreonine modification is found at Thr-406. Lys-428 and Lys-445 each carry N6-acetyllysine. A phosphoserine mark is found at Ser-459 and Ser-461. N6-acetyllysine occurs at positions 468 and 477. The region spanning 486–560 (KTLVLSNLSY…RTIRLELQGP (75 aa)) is the RRM 3 domain. A Glycyl lysine isopeptide (Lys-Gly) (interchain with G-Cter in SUMO2); alternate cross-link involves residue Lys-513. Lys-513 carries the post-translational modification N6-acetyllysine; alternate. Lys-521 carries the post-translational modification N6-acetyllysine. At Ser-563 the chain carries Phosphoserine. At Lys-572 the chain carries N6-acetyllysine. The RRM 4 domain maps to 572 to 647 (KTLFVKGLSE…NKVTLDWAKP (76 aa)). Lys-577 is covalently cross-linked (Glycyl lysine isopeptide (Lys-Gly) (interchain with G-Cter in SUMO2); alternate). The residue at position 577 (Lys-577) is an N6-acetyllysine; alternate. A Phosphoserine modification is found at Ser-580. Residue Lys-589 forms a Glycyl lysine isopeptide (Lys-Gly) (interchain with G-Cter in SUMO1); alternate linkage. Lys-589 is covalently cross-linked (Glycyl lysine isopeptide (Lys-Gly) (interchain with G-Cter in SUMO2); alternate). Phosphoserine is present on residues Ser-591 and Ser-619. Lys-624 participates in a covalent cross-link: Glycyl lysine isopeptide (Lys-Gly) (interchain with G-Cter in SUMO2). The disordered stretch occupies residues 642–714 (LDWAKPKGEG…KPQGKKTKFE (73 aa)). Lys-646 is subject to N6-acetyllysine. A compositionally biased stretch (gly residues) spans 650–703 (EGGFGGRGGGRGGFGGRGGGRGGGRGGFGGRGRGGFGGRGGFRGGRGGGGGGGD). An asymmetric dimethylarginine mark is found at Arg-656, Arg-660, Arg-666, Arg-670, Arg-674, Arg-680, Arg-682, Arg-688, and Arg-692. Arg-695 is modified (asymmetric dimethylarginine; alternate). Arg-695 is subject to Omega-N-methylarginine; alternate.

As to quaternary structure, identified in a IGF2BP1-dependent mRNP granule complex containing untranslated mRNAs. Component of the SWAP complex that consists of NPM1, NCL/nucleolin, PARP1 and SWAP70. Component of a complex which is at least composed of HTATSF1/Tat-SF1, the P-TEFb complex components CDK9 and CCNT1, RNA polymerase II, SUPT5H, and NCL/nucleolin. Interacts with AICDA. Interacts with APTX. Interacts with C1QBP. Interacts with ERBB4. Interacts (via C-terminus) with FMR1 isoform 6 (via N-terminus). Interacts with GZF1; this interaction is important for nucleolar localization of GZF1. Interacts with NSUN2. Interacts with NVL. Interacts (via N-terminus domain) with SETX. Interacts (via RRM1 and C-terminal RRM4/Arg/Gly-rich domains) with TERT; the interaction is important for nucleolar localization of TERT. Interacts with WDR46. Interacts with ZFP36. Interacts with LRRC34. Interacts with RRP1B. Interacts with HNRNPU; this interaction occurs during mitosis. Interacts with RIOK1; RIOK1 recruits NCL to PRMT5 for symmetrically methylation. Interacts with ZBTB7B. Interacts with MDK; this interaction promotes NCL clustering and lateral movements of this complex into lipid rafts leading to MDK internalization. Interacts with HDGF. Interacts with ALKBH2. Interacts with IGFBP5; this interaction is necessary for IGFBP5 localization to the nucleus. Interacts with DDX24 (when ubiquitinated); this interaction may be important during ribosome biogenesis. In terms of processing, some glutamate residues are glycylated by TTLL8. This modification occurs exclusively on glutamate residues and results in a glycine chain on the gamma-carboxyl group. Post-translationally, symmetrically methylated by PRMT5.

It is found in the nucleus. It localises to the nucleolus. Its subcellular location is the cytoplasm. In terms of biological role, nucleolin is the major nucleolar protein of growing eukaryotic cells. It is found associated with intranucleolar chromatin and pre-ribosomal particles. It induces chromatin decondensation by binding to histone H1. It is thought to play a role in pre-rRNA transcription and ribosome assembly. May play a role in the process of transcriptional elongation. Binds RNA oligonucleotides with 5'-UUAGGG-3' repeats more tightly than the telomeric single-stranded DNA 5'-TTAGGG-3' repeats. This is Nucleolin (NCL) from Mesocricetus auratus (Golden hamster).